The sequence spans 354 residues: CCN family member 3 (354 aa).

Positions 1–21 (MSLFLRKRCLCLGFLLFHLLS) are cleaved as a signal peptide. Residues 25 to 99 (ASLRCPSRCP…NNQTGICMVP (75 aa)) form the IGFBP N-terminal domain. Cystine bridges form between C29–C55, C33–C57, C37–C58, C44–C61, C69–C83, and C75–C96. N91 carries N-linked (GlcNAc...) asparagine glycosylation. One can recognise a VWFC domain in the interval 102–168 (DNCVFDGVIY…GECCEKWTCG (67 aa)). The region spanning 202-247 (NCIEQTTEWSACSKSCGMGVSTRVTNRNRQCEMVKQTRLCIVRPCE) is the TSP type-1 domain. C241 carries S-palmitoyl cysteine lipidation. 5 disulfides stabilise this stretch: C261–C298, C278–C312, C289–C328, C292–C330, and C297–C334. The CTCK domain maps to 261 to 335 (CLRTKKSLKA…GTCTCYSNCP (75 aa)). N277 is a glycosylation site (N-linked (GlcNAc...) asparagine).

Belongs to the CCN family. As to quaternary structure, interacts with FBLN1. Interacts (via CTCK domain) with NOTCH1 (via the EGF-like repeat region). Interacts with GJA1/CX43. Interacts with ITGA5:ITGB1, ITGAV:ITGB3 and ITGAV:ITGB5. Interacts with ZDHHC22; the interaction may lead to CCN3 palmitoylation. Post-translationally, may be palmitoylated on Cys-241, which is important for extracellular secretion. As to expression, expressed in large vessels including the ascending aorta, carotid arteries, and the thoracic aorta, in medium-sized vessels such as coronary arteries and small pulmonary veins and also in small vessels. In addition, also found to be present in the heart (at protein level). Expressed in astrocytes (at protein level). Detected in brain, bone, lung and muscle tissues. Expressed in skin, expression highly increases 5 days post-wounding, peaking on the 7th day to decline after 9 days. Expressed in pancreatic ducts and beta-cell islets. Expressed in the brain, in arcuate nucleus ESR1/KISS1 neurons, during lactation (at protein level).

It localises to the secreted. It is found in the cytoplasm. The protein localises to the cell junction. The protein resides in the gap junction. Its function is as follows. Immediate-early protein playing a role in various cellular processes including proliferation, adhesion, migration, differentiation and survival. Acts by binding to integrins or membrane receptors such as NOTCH1. Essential regulator of hematopoietic stem and progenitor cell function. Inhibits myogenic differentiation through the activation of Notch-signaling pathway. Inhibits vascular smooth muscle cells proliferation by increasing expression of cell-cycle regulators such as CDKN2B or CDKN1A independently of TGFB1 signaling. Ligand of integrins ITGAV:ITGB3 and ITGA5:ITGB1, acts directly upon endothelial cells to stimulate pro-angiogenic activities and induces angiogenesis. In endothelial cells, supports cell adhesion, induces directed cell migration (chemotaxis) and promotes cell survival. Also plays a role in cutaneous wound healing acting as integrin receptor ligand. Supports skin fibroblast adhesion through ITGA5:ITGB1 and ITGA6:ITGB1 and induces fibroblast chemotaxis through ITGAV:ITGB5. Seems to enhance bFGF-induced DNA synthesis in fibroblasts. Involved in bone regeneration as a negative regulator. Enhances the articular chondrocytic phenotype, whereas it repressed the one representing endochondral ossification. Impairs pancreatic beta-cell function, inhibits beta-cell proliferation and insulin secretion. Plays a role as negative regulator of endothelial pro-inflammatory activation reducing monocyte adhesion, its anti-inflammatory effects occur secondary to the inhibition of NF-kappaB signaling pathway. Contributes to the control and coordination of inflammatory processes in atherosclerosis. Attenuates inflammatory pain through regulation of IL1B- and TNF-induced MMP9, MMP2 and CCL2 expression. Inhibits MMP9 expression through ITGB1 engagement. Brain osteoanabolic hormone. During lactation, maintains the maternal skeleton and viability of offspring. In this context, may act on osteochondral skeletal stem cells. This Mus musculus (Mouse) protein is CCN family member 3 (Ccn3).